The chain runs to 298 residues: uncharacterized protein (298 aa).

The segment at 264–298 (APPPPLPCITTGPAALEDSPKASKANKGKKAKAKK) is disordered. Basic residues predominate over residues 287-298 (KANKGKKAKAKK).

This is an uncharacterized protein from Mus musculus (Mouse).